Reading from the N-terminus, the 220-residue chain is Large ribosomal subunit protein uL4 (220 aa).

Residues 45–102 form a disordered region; sequence AARQGTHKTKTRGEVRGGGRKPFRQKGTGRARQGSIRAPHYTGGGTVHGPVPRDYSQR. Residues 62–73 show a composition bias toward basic residues; that stretch reads GGRKPFRQKGTG.

It belongs to the universal ribosomal protein uL4 family. In terms of assembly, part of the 50S ribosomal subunit.

Its function is as follows. One of the primary rRNA binding proteins, this protein initially binds near the 5'-end of the 23S rRNA. It is important during the early stages of 50S assembly. It makes multiple contacts with different domains of the 23S rRNA in the assembled 50S subunit and ribosome. In terms of biological role, forms part of the polypeptide exit tunnel. The polypeptide is Large ribosomal subunit protein uL4 (Corynebacterium aurimucosum (strain ATCC 700975 / DSM 44827 / CIP 107346 / CN-1) (Corynebacterium nigricans)).